Here is an 87-residue protein sequence, read N- to C-terminus: Small ribosomal subunit protein bS20 (87 aa).

The segment covering 1-27 has biased composition (basic residues); the sequence is MANIKSAKKRALQSERRRQHNASRRSM. Residues 1–31 form a disordered region; the sequence is MANIKSAKKRALQSERRRQHNASRRSMTRTS.

It belongs to the bacterial ribosomal protein bS20 family.

Functionally, binds directly to 16S ribosomal RNA. The chain is Small ribosomal subunit protein bS20 from Pseudoalteromonas atlantica (strain T6c / ATCC BAA-1087).